The primary structure comprises 1295 residues: Phosphoribosylformylglycinamidine synthase (1295 aa).

The tract at residues 305 to 327 is disordered; it reads WPGAATGSGGEIRDEGATGRGAK. Residues 307–318, 386–388, and alanine 678 each bind ATP; these read GAATGSGGEIRD and TGY. Positions 679, 718, 722, and 884 each coordinate Mg(2+). An ATP-binding site is contributed by serine 886. One can recognise a Glutamine amidotransferase type-1 domain in the interval 1042-1295; the sequence is VAVLREQGVN…IFRNARKQLG (254 aa). Cysteine 1135 acts as the Nucleophile in catalysis. Active-site residues include histidine 1260 and glutamate 1262.

This sequence in the N-terminal section; belongs to the FGAMS family. Monomer.

The protein localises to the cytoplasm. It catalyses the reaction N(2)-formyl-N(1)-(5-phospho-beta-D-ribosyl)glycinamide + L-glutamine + ATP + H2O = 2-formamido-N(1)-(5-O-phospho-beta-D-ribosyl)acetamidine + L-glutamate + ADP + phosphate + H(+). The protein operates within purine metabolism; IMP biosynthesis via de novo pathway; 5-amino-1-(5-phospho-D-ribosyl)imidazole from N(2)-formyl-N(1)-(5-phospho-D-ribosyl)glycinamide: step 1/2. Functionally, phosphoribosylformylglycinamidine synthase involved in the purines biosynthetic pathway. Catalyzes the ATP-dependent conversion of formylglycinamide ribonucleotide (FGAR) and glutamine to yield formylglycinamidine ribonucleotide (FGAM) and glutamate. This is Phosphoribosylformylglycinamidine synthase from Salmonella paratyphi A (strain ATCC 9150 / SARB42).